Consider the following 382-residue polypeptide: uncharacterized protein (382 aa).

A run of 12 helical transmembrane segments spans residues 14-34 (GLLL…LWLA), 45-65 (VVSS…GYVI), 79-99 (FIFA…SWLA), 102-122 (FVAG…LMCS), 131-151 (LLAA…LLVS), 157-177 (LMSV…PLLF), 204-224 (LGVN…GLMP), 235-255 (ASIG…QWPI), 270-290 (VQVF…AMAP), 291-311 (ALFI…AWAC), 325-345 (ALLL…AMLM), and 348-368 (FSDN…LLML).

The protein belongs to the major facilitator superfamily. YcaD (TC 2.A.1.26) family.

The protein resides in the cell inner membrane. This is an uncharacterized protein from Escherichia coli O45:K1 (strain S88 / ExPEC).